Reading from the N-terminus, the 38-residue chain is Bacteriocin curvaticin FS47 (38 aa).

It localises to the secreted. Functionally, bacteriocin active against Listeria monocytogenes, Pediococcus, Enterococcus, Lactobacilli and Bacilli. The sequence is that of Bacteriocin curvaticin FS47 from Latilactobacillus curvatus (Lactobacillus curvatus).